Consider the following 707-residue polypeptide: MAREYPLERYRNFGIIAHIDAGKTTTTERVLYYTGKSHKIGEVHDGAATMDWMEQEQERGITITSAATTTFWERTEDGSTALSPKYRFNIIDTPGHVDFTIEVERSLAVLDGAVVLLDGNAGVEPQTETVWRQADRYKVPRIVFVNKMDKTGADFFNCVAMIKDRTGATPAPIQMPIGSETELEGHIDLVTMTEWVWEGEDLGASWVLRPVRESLKAKAEEMRAHLVELAVEMDDAAMEAFLEGKEPDVPALRALIRKGTLALKFVPILCGSAFKNKGVQPMLNGVVDYLPSPLDVPAYLGFKPGDETETRDIPRSADDGQPFAGLAFKIMNDPYMGTLTFTRIYSGKLSKGDAFLNATKGKKERVGRMVMMHANKQDEITEAFAGDIVALAGLKETTTGDTVCDPAQPVVLETMTFPQPVIEIAVEPKTKADQEKMSVGLQRLAAEDPSFRVETNFESGQTIMKGMGELHLDILIDRLRREFKVEANIGQPQVAYREKIGRAADIDYTHKKQSGGTGQFARIKLTFEPLEAGSGFQFVSAIVGGAVPKEYIPGVQKGLEMAKENGLLAGYPVTDFRATLTDGAFHDVDSSVLAFEIAARGAFRELKGKGDPRLMEPIMKVEVVTPEDYMGDVIGDLNSRRGQIQGSEARGIATAITAMVPLVNMFGYVSNLRGMSQGRAQFTMFFDHYDEVPRAEAQKIIQEVSGS.

The region spanning 8 to 294 (ERYRNFGIIA…GVVDYLPSPL (287 aa)) is the tr-type G domain. Residues 17–24 (AHIDAGKT), 92–96 (DTPGH), and 146–149 (NKMD) contribute to the GTP site.

It belongs to the TRAFAC class translation factor GTPase superfamily. Classic translation factor GTPase family. EF-G/EF-2 subfamily.

The protein resides in the cytoplasm. Functionally, catalyzes the GTP-dependent ribosomal translocation step during translation elongation. During this step, the ribosome changes from the pre-translocational (PRE) to the post-translocational (POST) state as the newly formed A-site-bound peptidyl-tRNA and P-site-bound deacylated tRNA move to the P and E sites, respectively. Catalyzes the coordinated movement of the two tRNA molecules, the mRNA and conformational changes in the ribosome. This Hyphomonas neptunium (strain ATCC 15444) protein is Elongation factor G.